We begin with the raw amino-acid sequence, 101 residues long: uncharacterized protein (101 aa).

This is an uncharacterized protein from Bacillus subtilis (strain 168).